The following is a 223-amino-acid chain: MDTAVVYADLHLARTGEPKHKSPPSLSPDTCQCPRWHRLALKLGCACLILLVLSVIGLGVLVLTLLQKPLIQNSPADVQENRTKTTDSPTKLKCPKDWHSHQDKCFHVSQAPNTWNKSLADCGGKGATLLLIQDQEELRFLRNLTKGKDRSFWIGLNYTLPDKNWKWINSSTLNSDVLSIFGDTKQNSCASISQDKVLSESCDSDNLWICQKELKCECMCNGS.

Topologically, residues 1–45 (MDTAVVYADLHLARTGEPKHKSPPSLSPDTCQCPRWHRLALKLGC) are cytoplasmic. The ITIM motif motif lies at 5 to 10 (VVYADL). An LCK-binding motif motif is present at residues 31–34 (CQCP). Residues 46–66 (ACLILLVLSVIGLGVLVLTLL) traverse the membrane as a helical; Signal-anchor for type II membrane protein segment. Topologically, residues 67–223 (QKPLIQNSPA…LKCECMCNGS (157 aa)) are extracellular. A C-type lectin domain is found at 101–211 (HQDKCFHVSQ…CDSDNLWICQ (111 aa)). Intrachain disulfides connect Cys122-Cys210 and Cys189-Cys202.

In terms of assembly, homodimer; disulfide-linked. Interacts with tyrosine kinase LCK. Binds PTPN6/SHP-1 in a phosphorylation-dependent manner. Expressed in a subset of natural killer cells.

The protein resides in the membrane. Receptor for CLEC2D/OCIL. Ligand-binding contributes to inhibition of cytotoxic natural killer (NK) cells. May mediate MHC class I-independent 'missing-self' recognition of allografts, tumor cells and virus-infected cells. The sequence is that of Killer cell lectin-like receptor subfamily B member 1B allele B from Rattus norvegicus (Rat).